A 1400-amino-acid chain; its full sequence is DNA-directed RNA polymerase subunit beta' (1400 aa).

Zn(2+) contacts are provided by C71, C73, C86, and C89. D462, D464, and D466 together coordinate Mg(2+). Zn(2+)-binding residues include C811, C885, C892, and C895.

Belongs to the RNA polymerase beta' chain family. The RNAP catalytic core consists of 2 alpha, 1 beta, 1 beta' and 1 omega subunit. When a sigma factor is associated with the core the holoenzyme is formed, which can initiate transcription. Mg(2+) serves as cofactor. It depends on Zn(2+) as a cofactor.

It catalyses the reaction RNA(n) + a ribonucleoside 5'-triphosphate = RNA(n+1) + diphosphate. DNA-dependent RNA polymerase catalyzes the transcription of DNA into RNA using the four ribonucleoside triphosphates as substrates. This Brucella suis biovar 1 (strain 1330) protein is DNA-directed RNA polymerase subunit beta'.